Here is a 452-residue protein sequence, read N- to C-terminus: Caspase-2 (452 aa).

Alanine 2 bears the N-acetylalanine mark. The propeptide occupies 2–169; the sequence is AAPSAGSWST…TVEHSLDNKD (168 aa). In terms of domain architecture, CARD spans 32–121; that stretch reads MHPHHQETLK…GHLEDMLLTT (90 aa). Phosphoserine is present on serine 157. Residues histidine 277 and cysteine 320 contribute to the active site. The propeptide occupies 326–333; it reads DRGVDQQD. Residues 327–336 are compositionally biased toward basic and acidic residues; the sequence is RGVDQQDGKN. A disordered region spans residues 327–354; sequence RGVDQQDGKNHAGSPGCEESDAGKEKLP. The residue at position 340 (serine 340) is a Phosphoserine.

It belongs to the peptidase C14A family. In terms of assembly, heterotetramer that consists of two anti-parallel arranged heterodimers, each one formed by a p18 subunit and a p12 subunit. Forms a complex named the PIDDosome with PIDD1 and CRADD. Interacts with NOL3 (via CARD domain); inhibits CASP2 activity in a phosphorylation-dependent manner. Post-translationally, the mature protease can process its own propeptide, but not that of other caspases. In terms of tissue distribution, expressed at higher levels in the embryonic lung, liver and kidney than in the heart and brain. In adults, higher level expression is seen in the placenta, lung, kidney, and pancreas than in the heart, brain, liver and skeletal muscle.

It carries out the reaction Strict requirement for an Asp residue at P1, with 316-Asp being essential for proteolytic activity and has a preferred cleavage sequence of Val-Asp-Val-Ala-Asp-|-.. Its function is as follows. Is a regulator of the cascade of caspases responsible for apoptosis execution. Might function by either activating some proteins required for cell death or inactivating proteins necessary for cell survival. Associates with PIDD1 and CRADD to form the PIDDosome, a complex that activates CASP2 and triggers apoptosis in response to genotoxic stress. In terms of biological role, acts as a positive regulator of apoptosis. Acts as a negative regulator of apoptosis. Functionally, may function as an endogenous apoptosis inhibitor that antagonizes caspase activation and cell death. The protein is Caspase-2 (CASP2) of Homo sapiens (Human).